Here is a 536-residue protein sequence, read N- to C-terminus: Putative UDP-glucuronosyltransferase ugt-47 (536 aa).

The first 21 residues, 1-21 (MFRYHSILLLAILYFFEYGLA), serve as a signal peptide directing secretion. N-linked (GlcNAc...) asparagine glycosylation is found at Asn-52 and Asn-308. The chain crosses the membrane as a helical span at residues 497–517 (IIVPCFFVAFYFIIFPFFKLF).

This sequence belongs to the UDP-glycosyltransferase family.

The protein resides in the membrane. The catalysed reaction is glucuronate acceptor + UDP-alpha-D-glucuronate = acceptor beta-D-glucuronoside + UDP + H(+). In Caenorhabditis elegans, this protein is Putative UDP-glucuronosyltransferase ugt-47 (ugt-47).